A 159-amino-acid polypeptide reads, in one-letter code: Vesicle transport protein SFT2A (159 aa).

The Cytoplasmic portion of the chain corresponds to 1–36; it reads MEKLRRVLSGQDDEEQGLTAQVLDASSLSFNTRLKW. Serine 9 bears the Phosphoserine mark. The helical transmembrane segment at 37-57 threads the bilayer; the sequence is FVICFVAGIFFSFLGTGLLWL. At 58–62 the chain is on the lumenal side; sequence PNGMK. The helical transmembrane segment at 63–83 threads the bilayer; it reads LFAVFYTLGNLAALASTCFLM. Residues 84–97 lie on the Cytoplasmic side of the membrane; the sequence is GPVKQLKKMFETTR. The helical transmembrane segment at 98–118 threads the bilayer; it reads LLATIIMLLCLVFTLCAALWW. Topologically, residues 119 to 122 are lumenal; sequence RKKG. Residues 123–143 traverse the membrane as a helical segment; it reads LALLFCILQFLSMTWYSLSYI. Residues 144–159 are Cytoplasmic-facing; that stretch reads PYARDAVLKCCSSLLG.

Belongs to the SFT2 family.

It localises to the membrane. Its function is as follows. May be involved in fusion of retrograde transport vesicles derived from an endocytic compartment with the Golgi complex. The chain is Vesicle transport protein SFT2A from Mus musculus (Mouse).